A 298-amino-acid chain; its full sequence is MPTTTDAASPARPRTGRTAVRAHASVRVERGPQGAPRLAELRSDVPIVLRMTGVSPVRTGARAGAGARADPGPLPTMTVHLVNGAAGPLAGDDLRLDISVGGGVRLVLRSVAATVALPGRGPGPSRLTVTAEVADGGELDLGPEPTVVADGADHQISTDVRLAATARLRLREEILLGRFGEPGGSILSTLRVDVAGGAEGPGADLAGGPFGWVPLLRQELLLGPQVPGLRGPAQLGGARAVGSLLVVAPAWAGAGPDAAVAEGVARLPLTGPGYLVSALADDAVTLRRRLTALADPTG.

It belongs to the UreD family. As to quaternary structure, ureD, UreF and UreG form a complex that acts as a GTP-hydrolysis-dependent molecular chaperone, activating the urease apoprotein by helping to assemble the nickel containing metallocenter of UreC. The UreE protein probably delivers the nickel.

It localises to the cytoplasm. In terms of biological role, required for maturation of urease via the functional incorporation of the urease nickel metallocenter. In Frankia alni (strain DSM 45986 / CECT 9034 / ACN14a), this protein is Urease accessory protein UreD.